The sequence spans 1020 residues: Protein translocase subunit SecA (1020 aa).

Residues glutamine 99, glycine 117–threonine 121, and aspartate 633 each bind ATP. The segment at asparagine 963–valine 992 is disordered. A compositionally biased stretch (basic and acidic residues) spans glutamate 978–proline 987. Cysteine 1002, cysteine 1004, cysteine 1013, and cysteine 1014 together coordinate Zn(2+).

Belongs to the SecA family. In terms of assembly, monomer and homodimer. Part of the essential Sec protein translocation apparatus which comprises SecA, SecYEG and auxiliary proteins SecDF. Other proteins may also be involved. Zn(2+) is required as a cofactor.

It localises to the cell inner membrane. Its subcellular location is the cytoplasm. It carries out the reaction ATP + H2O + cellular proteinSide 1 = ADP + phosphate + cellular proteinSide 2.. In terms of biological role, part of the Sec protein translocase complex. Interacts with the SecYEG preprotein conducting channel. Has a central role in coupling the hydrolysis of ATP to the transfer of proteins into and across the cell membrane, serving as an ATP-driven molecular motor driving the stepwise translocation of polypeptide chains across the membrane. In Protochlamydia amoebophila (strain UWE25), this protein is Protein translocase subunit SecA.